We begin with the raw amino-acid sequence, 98 residues long: Small ribosomal subunit protein bS20 (98 aa).

Positions His76–Ala98 are disordered.

Belongs to the bacterial ribosomal protein bS20 family.

Functionally, binds directly to 16S ribosomal RNA. In Trichormus variabilis (strain ATCC 29413 / PCC 7937) (Anabaena variabilis), this protein is Small ribosomal subunit protein bS20.